Here is a 208-residue protein sequence, read N- to C-terminus: Large ribosomal subunit protein uL4 (208 aa).

A disordered region spans residues 45–95 (RQGTHKAKTRSEVRGGGKKPFRQKGTGNARQGSSRSPIHVGGGTIFGPQPH). The segment covering 69 to 80 (GTGNARQGSSRS) has biased composition (polar residues).

It belongs to the universal ribosomal protein uL4 family. As to quaternary structure, part of the 50S ribosomal subunit.

Its function is as follows. One of the primary rRNA binding proteins, this protein initially binds near the 5'-end of the 23S rRNA. It is important during the early stages of 50S assembly. It makes multiple contacts with different domains of the 23S rRNA in the assembled 50S subunit and ribosome. Functionally, forms part of the polypeptide exit tunnel. The chain is Large ribosomal subunit protein uL4 from Chlorobium chlorochromatii (strain CaD3).